A 200-amino-acid chain; its full sequence is Superoxide dismutase [Mn] (200 aa).

Positions 27, 77, 160, and 164 each coordinate Mn(2+).

The protein belongs to the iron/manganese superoxide dismutase family. Homodimer. Requires Mn(2+) as cofactor.

It carries out the reaction 2 superoxide + 2 H(+) = H2O2 + O2. Functionally, destroys superoxide anion radicals which are normally produced within the cells and which are toxic to biological systems. This Rhizobium meliloti (strain 1021) (Ensifer meliloti) protein is Superoxide dismutase [Mn] (sodB).